Consider the following 292-residue polypeptide: 4-hydroxybenzoate octaprenyltransferase (292 aa).

The next 8 membrane-spanning stretches (helical) occupy residues 23–43, 47–67, 98–118, 141–161, 164–184, 211–231, 233–253, and 270–290; these read PIGIFLLLWPALWALWIAGEG, PGVAAVIVFGVVLMRAAGCVI, LILFMVLCLTAFALVLTMNWL, HLPQAYLGLAFGWAIPMTFAA, GSIPVVAWALYAATVLWALIY, YDREIIGALQIAMLAILAGIG, YLGLGGLYALGLAAAAGFSVY, and FLNNHWFGAAVFAGLFADYLW.

Belongs to the UbiA prenyltransferase family. Mg(2+) serves as cofactor.

It is found in the cell inner membrane. It catalyses the reaction all-trans-octaprenyl diphosphate + 4-hydroxybenzoate = 4-hydroxy-3-(all-trans-octaprenyl)benzoate + diphosphate. It functions in the pathway cofactor biosynthesis; ubiquinone biosynthesis. Its function is as follows. Catalyzes the prenylation of para-hydroxybenzoate (PHB) with an all-trans polyprenyl group. Mediates the second step in the final reaction sequence of ubiquinone-8 (UQ-8) biosynthesis, which is the condensation of the polyisoprenoid side chain with PHB, generating the first membrane-bound Q intermediate 3-octaprenyl-4-hydroxybenzoate. The sequence is that of 4-hydroxybenzoate octaprenyltransferase from Methylococcus capsulatus (strain ATCC 33009 / NCIMB 11132 / Bath).